A 699-amino-acid chain; its full sequence is Cysteine--tRNA ligase (699 aa).

Residues 1 to 226 (MTTITEKRLT…SEQQRLIHNP (226 aa)) form a unknown region. C254 is a Zn(2+) binding site. The short motif at 256–266 (MTVYDYCHLGH) is the 'HIGH' region element. 3 residues coordinate Zn(2+): C435, H460, and E464. Residues 508 to 512 (KMSKS) carry the 'KMSKS' region motif. K511 contributes to the ATP binding site.

The protein belongs to the class-I aminoacyl-tRNA synthetase family. In terms of assembly, monomer. Zn(2+) serves as cofactor.

The protein localises to the cytoplasm. The catalysed reaction is tRNA(Cys) + L-cysteine + ATP = L-cysteinyl-tRNA(Cys) + AMP + diphosphate. This Neisseria meningitidis serogroup A / serotype 4A (strain DSM 15465 / Z2491) protein is Cysteine--tRNA ligase (cysS).